We begin with the raw amino-acid sequence, 81 residues long: Conotoxin Cl9.6 (81 aa).

Positions 1–20 are cleaved as a signal peptide; the sequence is MSTLGMTLLILLLLLPLATP. Residues 21 to 40 constitute a propeptide that is removed on maturation; that stretch reads DDVGQPPKRDTLRNLLKIGT. 3 disulfides stabilise this stretch: Cys46–Cys69, Cys54–Cys76, and Cys60–Cys78.

As to expression, expressed by the venom duct.

It is found in the secreted. The sequence is that of Conotoxin Cl9.6 from Californiconus californicus (California cone).